The chain runs to 445 residues: Homogentisate 1,2-dioxygenase (445 aa).

Lys-98 is subject to N6-acetyllysine. 3 residues coordinate Fe cation: His-335, Glu-341, and His-371. The residue at position 414 (Lys-414) is an N6-succinyllysine.

This sequence belongs to the homogentisate dioxygenase family. As to quaternary structure, homohexamer arranged as a dimer of trimers. Requires Fe cation as cofactor. Highest expression in the prostate, small intestine, colon, kidney and liver.

It carries out the reaction homogentisate + O2 = 4-maleylacetoacetate + H(+). It participates in amino-acid degradation; L-phenylalanine degradation; acetoacetate and fumarate from L-phenylalanine: step 4/6. In terms of biological role, catalyzes the conversion of homogentisate to maleylacetoacetate. The polypeptide is Homogentisate 1,2-dioxygenase (HGD) (Homo sapiens (Human)).